We begin with the raw amino-acid sequence, 126 residues long: Large ribosomal subunit protein bL17 (126 aa).

Belongs to the bacterial ribosomal protein bL17 family. As to quaternary structure, part of the 50S ribosomal subunit. Contacts protein L32.

This Nitrosococcus oceani (strain ATCC 19707 / BCRC 17464 / JCM 30415 / NCIMB 11848 / C-107) protein is Large ribosomal subunit protein bL17.